A 507-amino-acid chain; its full sequence is ATP synthase subunit alpha, chloroplastic (507 aa).

Residue 170-177 (GDRQTGKT) coordinates ATP.

This sequence belongs to the ATPase alpha/beta chains family. As to quaternary structure, F-type ATPases have 2 components, CF(1) - the catalytic core - and CF(0) - the membrane proton channel. CF(1) has five subunits: alpha(3), beta(3), gamma(1), delta(1), epsilon(1). CF(0) has four main subunits: a, b, b' and c.

The protein localises to the plastid. It localises to the chloroplast thylakoid membrane. The catalysed reaction is ATP + H2O + 4 H(+)(in) = ADP + phosphate + 5 H(+)(out). Its function is as follows. Produces ATP from ADP in the presence of a proton gradient across the membrane. The alpha chain is a regulatory subunit. This is ATP synthase subunit alpha, chloroplastic from Vitis vinifera (Grape).